The chain runs to 347 residues: Haptoglobin (347 aa).

A signal peptide spans 1–18 (MRALGAVVALLLCGQLFA). Residues 31–88 (DSCPKPPEIPKGYVEHMVRYHCQTYYKLRTAGDGVYTLDSNKQWTNKVTGEKLPECEA) enclose the Sushi domain. Intrachain disulfides connect cysteine 52–cysteine 86 and cysteine 90–cysteine 207. Residues 103-345 (IMGGSLDAKG…ILDWIQTTIA (243 aa)) enclose the Peptidase S1 domain. N-linked (GlcNAc...) asparagine glycans are attached at residues asparagine 125, asparagine 151, asparagine 183, and asparagine 232. Intrachain disulfides connect cysteine 250–cysteine 281 and cysteine 292–cysteine 322. The interaction with CD163 stretch occupies residues 259 to 264 (VPEKKT).

This sequence belongs to the peptidase S1 family. As to quaternary structure, tetramer of two alpha and two beta chains; disulfide-linked. The hemoglobin/haptoglobin complex is composed of a haptoglobin dimer bound to two hemoglobin alpha-beta dimers. Interacts with CD163. Interacts with ERGIC3. In terms of tissue distribution, expressed by the liver and secreted in plasma.

The protein resides in the secreted. Functionally, as a result of hemolysis, hemoglobin is found to accumulate in the kidney and is secreted in the urine. Haptoglobin captures, and combines with free plasma hemoglobin to allow hepatic recycling of heme iron and to prevent kidney damage. Haptoglobin also acts as an antioxidant, has antibacterial activity and plays a role in modulating many aspects of the acute phase response. Hemoglobin/haptoglobin complexes are rapidly cleared by the macrophage CD163 scavenger receptor expressed on the surface of liver Kupfer cells through an endocytic lysosomal degradation pathway. The protein is Haptoglobin (HP) of Sus scrofa (Pig).